Consider the following 2298-residue polypeptide: Non-reducing polyketide synthase pgmA (2298 aa).

Positions 8 to 333 (LFIFGDQTLD…IYNVLKQSPL (326 aa)) are N-terminal acylcarrier protein transacylase domain (SAT). Residues 336 to 361 (YLSSKPAQSRQPVSNEGAPEPGNGRQ) are disordered. A compositionally biased stretch (polar residues) spans 340–349 (KPAQSRQPVS). Residues 360 to 798 (RQKLAIIGMS…GGNSALLVED (439 aa)) enclose the Ketosynthase family 3 (KS3) domain. Residues Cys-532, His-667, and His-714 each act as for beta-ketoacyl synthase activity in the active site. The segment at 901-1193 (VFAFTGQGAH…GMVKGVLGPQ (293 aa)) is acyl/malonyl transferases. The active-site For acyl/malonyl transferase activity is the Ser-994. The N-terminal hotdog fold stretch occupies residues 1283–1415 (HRVVEETHDS…CVVRFRDRGL (133 aa)). Residues 1283–1589 (HRVVEETHDS…IQGVPRRVLK (307 aa)) form the PKS/mFAS DH domain. The segment at 1294–1586 (KTRIVIEADI…QISIQGVPRR (293 aa)) is product template (PT) domainn. Catalysis depends on His-1315, which acts as the Proton acceptor; for dehydratase activity. The interval 1438–1589 (VTGETARFNR…IQGVPRRVLK (152 aa)) is C-terminal hotdog fold. Catalysis depends on Asp-1502, which acts as the Proton donor; for dehydratase activity. The segment at 1619 to 1642 (YPVANGHAQATPTSGPVNGEPRPS) is disordered. The Carrier 1 domain occupies 1641-1716 (PSRFPRALEI…SLRALLSEPE (76 aa)). Ser-1675 bears the O-(pantetheine 4'-phosphoryl)serine mark. The disordered stretch occupies residues 1716-1762 (ERSTNGMPAASAKDTSRFDEIPPMNGHKTNGHVMNGHSNGSSNGLPD). The segment covering 1751–1760 (GHSNGSSNGL) has biased composition (polar residues). Positions 1765 to 1840 (KVDFQRVLQI…DLKRYLFPQD (76 aa)) constitute a Carrier 2 domain. The residue at position 1799 (Ser-1799) is an O-(pantetheine 4'-phosphoryl)serine. The interval 1927–2178 (VTGASGSLGG…YWTPVEEVAG (252 aa)) is reductase (R) domain.

The protein operates within pigment biosynthesis. Its pathway is secondary metabolite biosynthesis. Functionally, non-reducing polyketide synthase; part of the gene cluster that mediates the biosynthesis of pleosporalin A, ascomycone A, as well as a third cryptic naphthoquinone derived pigment, all responsible for the coloration of conidia. The non-reducing polyketide synthase pgmA is responsible for the condensation of seven acetyl-CoA units to produce the cyclized heptaketide 3-acetonyl-1,6,8-trihydroxy-2-naphthaldehyde. The pathway begins with the biosynthesis of the cyclized heptaketide 3-acetonyl-1,6,8-trihydroxy-2-naphthaldehyde by the NR-PKS pgmA. The C-6 hydroxyl group is further methylated by the O-methyltransferase pgmB to yield fusarubinaldehyde which is in turn oxidized by the cytochrome P450 monooxygenase pgmC at C-9. The C-1 hydroxyl group is then methylated spontaneously. Although pgmE, pgmD and pgmH are essential for the production of pleosporalin A, it is not the case for the 2 other final products and it remains difficult to assign a specific function to each enzyme. PgmF and pgmG seem not to be involved in pigment biosynthesis although they were regulated by the cluster-specific transcription factor pgmR. The protein is Non-reducing polyketide synthase pgmA of Aspergillus terreus (strain NIH 2624 / FGSC A1156).